The sequence spans 136 residues: Large ribosomal subunit protein uL16 (136 aa).

This sequence belongs to the universal ribosomal protein uL16 family. Part of the 50S ribosomal subunit.

Binds 23S rRNA and is also seen to make contacts with the A and possibly P site tRNAs. In Enterobacter sp. (strain 638), this protein is Large ribosomal subunit protein uL16.